A 177-amino-acid chain; its full sequence is ATP synthase subunit delta (177 aa).

Belongs to the ATPase delta chain family. In terms of assembly, F-type ATPases have 2 components, F(1) - the catalytic core - and F(0) - the membrane proton channel. F(1) has five subunits: alpha(3), beta(3), gamma(1), delta(1), epsilon(1). F(0) has three main subunits: a(1), b(2) and c(10-14). The alpha and beta chains form an alternating ring which encloses part of the gamma chain. F(1) is attached to F(0) by a central stalk formed by the gamma and epsilon chains, while a peripheral stalk is formed by the delta and b chains.

It is found in the cell membrane. F(1)F(0) ATP synthase produces ATP from ADP in the presence of a proton or sodium gradient. F-type ATPases consist of two structural domains, F(1) containing the extramembraneous catalytic core and F(0) containing the membrane proton channel, linked together by a central stalk and a peripheral stalk. During catalysis, ATP synthesis in the catalytic domain of F(1) is coupled via a rotary mechanism of the central stalk subunits to proton translocation. Its function is as follows. This protein is part of the stalk that links CF(0) to CF(1). It either transmits conformational changes from CF(0) to CF(1) or is implicated in proton conduction. The chain is ATP synthase subunit delta from Exiguobacterium sibiricum (strain DSM 17290 / CCUG 55495 / CIP 109462 / JCM 13490 / 255-15).